The sequence spans 337 residues: tRNA N6-adenosine threonylcarbamoyltransferase (337 aa).

Residues histidine 111 and histidine 115 each coordinate Fe cation. Substrate is bound by residues 134-138, aspartate 167, glycine 180, and asparagine 272; that span reads LVSGG. Aspartate 300 contributes to the Fe cation binding site.

The protein belongs to the KAE1 / TsaD family. It depends on Fe(2+) as a cofactor.

Its subcellular location is the cytoplasm. The enzyme catalyses L-threonylcarbamoyladenylate + adenosine(37) in tRNA = N(6)-L-threonylcarbamoyladenosine(37) in tRNA + AMP + H(+). In terms of biological role, required for the formation of a threonylcarbamoyl group on adenosine at position 37 (t(6)A37) in tRNAs that read codons beginning with adenine. Is involved in the transfer of the threonylcarbamoyl moiety of threonylcarbamoyl-AMP (TC-AMP) to the N6 group of A37, together with TsaE and TsaB. TsaD likely plays a direct catalytic role in this reaction. In Salmonella schwarzengrund (strain CVM19633), this protein is tRNA N6-adenosine threonylcarbamoyltransferase.